The following is a 105-amino-acid chain: Heat shock protein HspQ (105 aa).

The protein belongs to the HspQ family.

The protein resides in the cytoplasm. In terms of biological role, involved in the degradation of certain denaturated proteins, including DnaA, during heat shock stress. The protein is Heat shock protein HspQ of Blochmanniella floridana.